Reading from the N-terminus, the 184-residue chain is Mitochondrial import inner membrane translocase subunit Tim22 (184 aa).

2 disulfides stabilise this stretch: C59-C131 and C150-C169. Helical transmembrane passes span 64 to 84 (ALAC…TAGI), 115 to 133 (YAKN…ECLV), and 160 to 180 (AGLK…AVID).

The protein belongs to the Tim17/Tim22/Tim23 family. In terms of assembly, core component of the TIM22 complex.

It localises to the mitochondrion inner membrane. In terms of biological role, essential core component of the TIM22 complex, a complex that mediates the import and insertion of multi-pass transmembrane proteins into the mitochondrial inner membrane. In the TIM22 complex, it constitutes the voltage-activated and signal-gated channel. Forms a twin-pore translocase that uses the membrane potential as external driving force in 2 voltage-dependent steps. The chain is Mitochondrial import inner membrane translocase subunit Tim22 (timm22) from Xenopus laevis (African clawed frog).